Consider the following 205-residue polypeptide: Probable GTP-binding protein EngB (205 aa).

The EngB-type G domain maps to 27–201; it reads TGIEIAFAGR…AAKLDFWFSP (175 aa). GTP-binding positions include 35–42, 62–66, 80–83, 147–150, and 180–182; these read GRSNAGKS, GRTQL, DLPG, TKAD, and FSA. Mg(2+) contacts are provided by Ser42 and Thr64.

Belongs to the TRAFAC class TrmE-Era-EngA-EngB-Septin-like GTPase superfamily. EngB GTPase family. Mg(2+) serves as cofactor.

Its function is as follows. Necessary for normal cell division and for the maintenance of normal septation. This chain is Probable GTP-binding protein EngB, found in Haemophilus influenzae (strain PittEE).